We begin with the raw amino-acid sequence, 353 residues long: Ion-translocating oxidoreductase complex subunit D (353 aa).

Helical transmembrane passes span 20–40 (IMLL…YYFG), 44–64 (IIQV…ILHL), 77–108 (SALL…AIII), and 123–143 (PAMV…TSWL). Residue threonine 187 is modified to FMN phosphoryl threonine. Helical transmembrane passes span 214-234 (VIAG…GVFL), 242-262 (WHIP…GWLL), 267-287 (LVTP…FFIA), and 301-318 (LLYG…RSYG).

Belongs to the NqrB/RnfD family. As to quaternary structure, the complex is composed of six subunits: RnfA, RnfB, RnfC, RnfD, RnfE and RnfG. FMN serves as cofactor.

The protein localises to the cell inner membrane. Functionally, part of a membrane-bound complex that couples electron transfer with translocation of ions across the membrane. In Erwinia tasmaniensis (strain DSM 17950 / CFBP 7177 / CIP 109463 / NCPPB 4357 / Et1/99), this protein is Ion-translocating oxidoreductase complex subunit D.